Here is a 404-residue protein sequence, read N- to C-terminus: Probable tRNA sulfurtransferase (404 aa).

Residues 60-165 enclose the THUMP domain; sequence HEVAESLKEI…DEAAYISYED (106 aa). ATP contacts are provided by residues 183-184, 208-209, arginine 265, glycine 287, and glutamine 296; these read ML and HF.

Belongs to the ThiI family.

It is found in the cytoplasm. It catalyses the reaction [ThiI sulfur-carrier protein]-S-sulfanyl-L-cysteine + a uridine in tRNA + 2 reduced [2Fe-2S]-[ferredoxin] + ATP + H(+) = [ThiI sulfur-carrier protein]-L-cysteine + a 4-thiouridine in tRNA + 2 oxidized [2Fe-2S]-[ferredoxin] + AMP + diphosphate. The catalysed reaction is [ThiS sulfur-carrier protein]-C-terminal Gly-Gly-AMP + S-sulfanyl-L-cysteinyl-[cysteine desulfurase] + AH2 = [ThiS sulfur-carrier protein]-C-terminal-Gly-aminoethanethioate + L-cysteinyl-[cysteine desulfurase] + A + AMP + 2 H(+). It functions in the pathway cofactor biosynthesis; thiamine diphosphate biosynthesis. Functionally, catalyzes the ATP-dependent transfer of a sulfur to tRNA to produce 4-thiouridine in position 8 of tRNAs, which functions as a near-UV photosensor. Also catalyzes the transfer of sulfur to the sulfur carrier protein ThiS, forming ThiS-thiocarboxylate. This is a step in the synthesis of thiazole, in the thiamine biosynthesis pathway. The sulfur is donated as persulfide by IscS. The protein is Probable tRNA sulfurtransferase of Streptococcus agalactiae serotype V (strain ATCC BAA-611 / 2603 V/R).